The chain runs to 526 residues: Inosine-5'-monophosphate dehydrogenase (526 aa).

CBS domains lie at 120–179 and 183–239; these read FIQD…EDPV and MATD…PLAS. NAD(+) contacts are provided by residues 276 to 278 and 326 to 328; these read DSS and GMG. Residues G328 and G330 each coordinate K(+). Residue S331 coordinates IMP. A K(+)-binding site is contributed by C333. C333 functions as the Thioimidate intermediate in the catalytic mechanism. IMP contacts are provided by residues 366–368 and 389–390; these read DGG and GS. The Proton acceptor role is filled by R439. Q451 serves as a coordination point for IMP. K(+) is bound at residue S506. Residues 506-526 are disordered; the sequence is SAQTEGNVHGLHTHEKKLYSS. A compositionally biased stretch (basic and acidic residues) spans 517–526; sequence HTHEKKLYSS.

This sequence belongs to the IMPDH/GMPR family. As to quaternary structure, homotetramer. Requires K(+) as cofactor.

It is found in the cytoplasm. The enzyme catalyses IMP + NAD(+) + H2O = XMP + NADH + H(+). Its pathway is secondary metabolite biosynthesis; terpenoid biosynthesis. Mycophenolic acid (MPA) is a non-competitive inhibitor that prevents formation of the closed enzyme conformation by binding to the same site as the amobile flap. In contrast, mizoribine monophosphate (MZP) is a competitive inhibitor that induces the closed conformation. MPA is a potent inhibitor of mammalian IMPDHs but a poor inhibitor of the bacterial enzymes. MZP is a more potent inhibitor of bacterial IMPDH. Functionally, catalyzes the conversion of inosine 5'-phosphate (IMP) to xanthosine 5'-phosphate (XMP), the first committed and rate-limiting step in the de novo synthesis of guanine nucleotides, and therefore plays an important role in the regulation of cell growth. Part of the gene cluster that mediates the biosynthesis of mycophenolic acid (MPA), the first isolated antibiotic natural product in the world. Does not play a role in the biosynthesis of MPA, but is involved in self resistance to MPA, since MPA acts as an inhibitor of IMP dehydrogenases. The protein is Inosine-5'-monophosphate dehydrogenase of Penicillium roqueforti (strain FM164).